The primary structure comprises 322 residues: Pantothenate kinase (322 aa).

Position 101 to 108 (101 to 108 (GSVAVGKS)) interacts with ATP.

Belongs to the prokaryotic pantothenate kinase family.

The protein localises to the cytoplasm. It carries out the reaction (R)-pantothenate + ATP = (R)-4'-phosphopantothenate + ADP + H(+). The protein operates within cofactor biosynthesis; coenzyme A biosynthesis; CoA from (R)-pantothenate: step 1/5. This is Pantothenate kinase from Psychromonas ingrahamii (strain DSM 17664 / CCUG 51855 / 37).